Consider the following 254-residue polypeptide: Wall-associated protein (254 aa).

Residues 25–46 (DRVEPKEEPPKVPQAPKRDLKP) are disordered.

The protein resides in the secreted. Its subcellular location is the cell wall. The chain is Wall-associated protein (wapA') from Geobacillus stearothermophilus (Bacillus stearothermophilus).